The following is a 749-amino-acid chain: G-type lectin S-receptor-like serine/threonine-protein kinase At1g61460 (749 aa).

Positions 1–25 (MRITFFASLLLFTNTIFISFSFAIA) are cleaved as a signal peptide. One can recognise a Bulb-type lectin domain in the interval 26-145 (GINKESPLSI…FSGRTLWQSF (120 aa)). Over 26–392 (GINKESPLSI…ELGGNKRKKT (367 aa)) the chain is Extracellular. Asn54, Asn95, Asn118, and Asn135 each carry an N-linked (GlcNAc...) asparagine glycan. Positions 247–280 (PAHSCDYYGVCGPFGICVKSVCKCFKGFIPKYIE) constitute an EGF-like; atypical domain. 2 disulfides stabilise this stretch: Cys251–Cys263 and Cys257–Cys268. N-linked (GlcNAc...) asparagine glycans are attached at residues Asn286, Asn302, and Asn341. The PAN domain maps to 299–381 (CQENSTKKDA…GEILSIRLAR (83 aa)). Disulfide bonds link Cys334–Cys355 and Cys338–Cys344. The helical transmembrane segment at 393–413 (ITASIVSLSLFLILGSTAFGF) threads the bilayer. Residues 414–749 (WRYRVKHNAS…EMTKSVILGR (336 aa)) are Cytoplasmic-facing. Residues 454–721 (FSLSNKLGQG…DLPSPKQPTF (268 aa)) form the Protein kinase domain. Residues 460-468 (LGQGGFGSV) and Lys482 each bind ATP. The caM-binding stretch occupies residues 543–560 (RKRLEIDWPKRFDIIQGI). The Proton acceptor role is filled by Asp579.

The protein belongs to the protein kinase superfamily. Ser/Thr protein kinase family.

It localises to the cell membrane. The catalysed reaction is L-seryl-[protein] + ATP = O-phospho-L-seryl-[protein] + ADP + H(+). It carries out the reaction L-threonyl-[protein] + ATP = O-phospho-L-threonyl-[protein] + ADP + H(+). This Arabidopsis thaliana (Mouse-ear cress) protein is G-type lectin S-receptor-like serine/threonine-protein kinase At1g61460.